We begin with the raw amino-acid sequence, 251 residues long: 1-(5-phosphoribosyl)-5-[(5-phosphoribosylamino)methylideneamino] imidazole-4-carboxamide isomerase (251 aa).

Asp-8 functions as the Proton acceptor in the catalytic mechanism. Residue Asp-131 is the Proton donor of the active site.

The protein belongs to the HisA/HisF family.

It localises to the cytoplasm. It catalyses the reaction 1-(5-phospho-beta-D-ribosyl)-5-[(5-phospho-beta-D-ribosylamino)methylideneamino]imidazole-4-carboxamide = 5-[(5-phospho-1-deoxy-D-ribulos-1-ylimino)methylamino]-1-(5-phospho-beta-D-ribosyl)imidazole-4-carboxamide. It functions in the pathway amino-acid biosynthesis; L-histidine biosynthesis; L-histidine from 5-phospho-alpha-D-ribose 1-diphosphate: step 4/9. This is 1-(5-phosphoribosyl)-5-[(5-phosphoribosylamino)methylideneamino] imidazole-4-carboxamide isomerase from Burkholderia pseudomallei (strain 1710b).